The following is a 206-amino-acid chain: Orotate phosphoribosyltransferase (206 aa).

5-phospho-alpha-D-ribose 1-diphosphate is bound by residues Arg-114, Lys-115, Lys-118, His-120, and 141-149 (EDVVTTGQS). Orotate-binding residues include Thr-145 and Arg-173.

The protein belongs to the purine/pyrimidine phosphoribosyltransferase family. PyrE subfamily. As to quaternary structure, homodimer. Mg(2+) is required as a cofactor.

It catalyses the reaction orotidine 5'-phosphate + diphosphate = orotate + 5-phospho-alpha-D-ribose 1-diphosphate. The protein operates within pyrimidine metabolism; UMP biosynthesis via de novo pathway; UMP from orotate: step 1/2. Catalyzes the transfer of a ribosyl phosphate group from 5-phosphoribose 1-diphosphate to orotate, leading to the formation of orotidine monophosphate (OMP). This chain is Orotate phosphoribosyltransferase, found in Nostoc sp. (strain PCC 7120 / SAG 25.82 / UTEX 2576).